Consider the following 754-residue polypeptide: Glutathione biosynthesis bifunctional protein GshAB (754 aa).

The tract at residues 1 to 332 (MTLNQLLQKL…QGHALNEKIA (332 aa)) is glutamate--cysteine ligase. An ATP-grasp domain is found at 488 to 746 (KKILADAGFP…ITTKILDKLF (259 aa)). 515 to 573 (PLIKDKQIVVKPKSTNFGLGISIFQEPASLDNYQKALEIAFAEDTSVLVEEFIPGTEYR) provides a ligand contact to ATP. Residues Asp695, Glu716, and Asn718 each coordinate Mg(2+). Mn(2+)-binding residues include Asp695, Glu716, and Asn718.

It in the N-terminal section; belongs to the glutamate--cysteine ligase type 1 family. Type 2 subfamily. Monomer. Mg(2+) serves as cofactor. Mn(2+) is required as a cofactor.

The catalysed reaction is L-cysteine + L-glutamate + ATP = gamma-L-glutamyl-L-cysteine + ADP + phosphate + H(+). It catalyses the reaction gamma-L-glutamyl-L-cysteine + glycine + ATP = glutathione + ADP + phosphate + H(+). It participates in sulfur metabolism; glutathione biosynthesis; glutathione from L-cysteine and L-glutamate: step 1/2. The protein operates within sulfur metabolism; glutathione biosynthesis; glutathione from L-cysteine and L-glutamate: step 2/2. Its function is as follows. Synthesizes glutathione from L-glutamate and L-cysteine via gamma-L-glutamyl-L-cysteine. This Streptococcus thermophilus (strain CNRZ 1066) protein is Glutathione biosynthesis bifunctional protein GshAB.